Reading from the N-terminus, the 210-residue chain is Frataxin, mitochondrial (210 aa).

Residues 1-41 constitute a mitochondrion transit peptide; sequence MWTFGRRAVAGLLASPSPAQAQTLARAPRLAELAQLCSRRG.

This sequence belongs to the frataxin family. As to quaternary structure, component of the mitochondrial core iron-sulfur cluster (ISC) complex composed of NFS1, LYRM4, NDUFAB1, ISCU, FXN, and FDX2; this complex is a heterohexamer containing two copies of each monomer. Homodimer. Monomer (probable predominant form). Oligomer. Monomers and polymeric aggregates of &gt;1 MDa have been isolated from mitochondria. A small fraction of heterologous overexpressed recombinant frataxin forms high-molecular weight aggregates that incorporate iron. Interacts with LYRM4. Interacts (via ferrous form) with ISCU; the interaction is possible when both are bound to the dimeric form of the cysteine desulfurase complex (NFS1:LYRM4) and the interaction enhances FXN interaction to the dimeric form of the cysteine desulfurase complex (NFS1:LYRM4). Interacts with FECH; one iron-bound FXN monomer seems to interact with a FECH homodimer. Interacts with SDHA and SDHB. Interacts with ACO2; the interaction is dependent on citrate. Interacts with HSPA9. Interacts with ACO1. Interacts with ISCU (cytoplasmic form). Post-translationally, processed in two steps by mitochondrial processing peptidase (MPP). MPP first cleaves the precursor to intermediate form and subsequently converts the intermediate to yield frataxin mature form (frataxin(81-210)) which is the predominant form. The additional forms, frataxin(56-210) and frataxin(78-210), seem to be produced when the normal maturation process is impaired; their physiological relevance is unsure.

It is found in the mitochondrion. It localises to the cytoplasm. The protein resides in the cytosol. It carries out the reaction 4 Fe(2+) + O2 + 4 H(+) = 4 Fe(3+) + 2 H2O. Functionally, functions as an activator of persulfide transfer to the scaffoding protein ISCU as component of the core iron-sulfur cluster (ISC) assembly complex and participates to the [2Fe-2S] cluster assembly. Accelerates sulfur transfer from NFS1 persulfide intermediate to ISCU and to small thiols such as L-cysteine and glutathione leading to persulfuration of these thiols and ultimately sulfide release. Binds ferrous ion and is released from FXN upon the addition of both L-cysteine and reduced FDX2 during [2Fe-2S] cluster assembly. The core iron-sulfur cluster (ISC) assembly complex is involved in the de novo synthesis of a [2Fe-2S] cluster, the first step of the mitochondrial iron-sulfur protein biogenesis. This process is initiated by the cysteine desulfurase complex (NFS1:LYRM4:NDUFAB1) that produces persulfide which is delivered on the scaffold protein ISCU in a FXN-dependent manner. Then this complex is stabilized by FDX2 which provides reducing equivalents to accomplish the [2Fe-2S] cluster assembly. Finally, the [2Fe-2S] cluster is transferred from ISCU to chaperone proteins, including HSCB, HSPA9 and GLRX5. May play a role in the protection against iron-catalyzed oxidative stress through its ability to catalyze the oxidation of Fe(2+) to Fe(3+); the oligomeric form but not the monomeric form has in vitro ferroxidase activity. May be able to store large amounts of iron in the form of a ferrihydrite mineral by oligomerization; however, the physiological relevance is unsure as reports are conflicting and the function has only been shown using heterologous overexpression systems. May function as an iron chaperone protein that protects the aconitase [4Fe-4S]2+ cluster from disassembly and promotes enzyme reactivation. May play a role as a high affinity iron binding partner for FECH that is capable of both delivering iron to ferrochelatase and mediating the terminal step in mitochondrial heme biosynthesis. Modulates the RNA-binding activity of ACO1. May be involved in the cytoplasmic iron-sulfur protein biogenesis. May contribute to oxidative stress resistance and overall cell survival. The sequence is that of Frataxin, mitochondrial from Macaca fascicularis (Crab-eating macaque).